A 237-amino-acid polypeptide reads, in one-letter code: tRNA(His) guanylyltransferase (237 aa).

Mg(2+)-binding residues include Asp-29, Gly-30, and Asp-77. GTP is bound by residues Asp-29 to His-34 and Ser-76 to Asp-77.

It belongs to the tRNA(His) guanylyltransferase family. It depends on Mg(2+) as a cofactor.

The enzyme catalyses a 5'-end ribonucleotide-tRNA(His) + GTP + ATP + H2O = a 5'-end phospho-guanosine-ribonucleotide-tRNA(His) + AMP + 2 diphosphate + H(+). Functionally, adds a GMP to the 5'-end of tRNA(His) after transcription and RNase P cleavage. The chain is tRNA(His) guanylyltransferase (THG1) from Candida glabrata (strain ATCC 2001 / BCRC 20586 / JCM 3761 / NBRC 0622 / NRRL Y-65 / CBS 138) (Yeast).